We begin with the raw amino-acid sequence, 352 residues long: Phosphoribosylformylglycinamidine cyclo-ligase (352 aa).

Belongs to the AIR synthase family.

The protein resides in the cytoplasm. It carries out the reaction 2-formamido-N(1)-(5-O-phospho-beta-D-ribosyl)acetamidine + ATP = 5-amino-1-(5-phospho-beta-D-ribosyl)imidazole + ADP + phosphate + H(+). Its pathway is purine metabolism; IMP biosynthesis via de novo pathway; 5-amino-1-(5-phospho-D-ribosyl)imidazole from N(2)-formyl-N(1)-(5-phospho-D-ribosyl)glycinamide: step 2/2. This Pseudomonas putida (strain GB-1) protein is Phosphoribosylformylglycinamidine cyclo-ligase.